We begin with the raw amino-acid sequence, 29 residues long: Cytochrome b6-f complex subunit 8 (29 aa).

Residues 3 to 23 (IISLAWAALMVVFTFSLSLVV) form a helical membrane-spanning segment.

The protein belongs to the PetN family. In terms of assembly, the 4 large subunits of the cytochrome b6-f complex are cytochrome b6, subunit IV (17 kDa polypeptide, PetD), cytochrome f and the Rieske protein, while the 4 small subunits are PetG, PetL, PetM and PetN. The complex functions as a dimer.

Its subcellular location is the plastid. It localises to the chloroplast thylakoid membrane. Its function is as follows. Component of the cytochrome b6-f complex, which mediates electron transfer between photosystem II (PSII) and photosystem I (PSI), cyclic electron flow around PSI, and state transitions. The chain is Cytochrome b6-f complex subunit 8 from Nicotiana tomentosiformis (Tobacco).